Consider the following 819-residue polypeptide: Protein kinase C-binding protein NELL2 (819 aa).

The N-terminal stretch at 1-24 (MHAMESRVLLRTFCVILGLEAVWG) is a signal peptide. N-linked (GlcNAc...) asparagine glycosylation is found at asparagine 56, asparagine 228, asparagine 296, and asparagine 301. Positions 58-231 (TKAFLFQDSP…AQCPDLNRTC (174 aa)) constitute a Laminin G-like domain. In terms of domain architecture, VWFC 1 spans 275–334 (RTCTMKGTTYREFESWTDGCKNCTCLNGTIQCETLVCPAPDCPAKSAPAYVDGKCCKECK). Residues 400-442 (GYDFCSEKHTCMENSVCRNLNDRAVCSCRDGFRALREDNAYCE) form the EGF-like 1 domain. Disulfide bonds link cysteine 404/cysteine 416, cysteine 410/cysteine 425, and cysteine 427/cysteine 441. Aspartate 443, isoleucine 444, and glutamate 446 together coordinate Ca(2+). Positions 443–484 (DIDECAEGRHYCRENTMCVNTPGSFLCICQTGYIRIDDYSCT) constitute an EGF-like 2; calcium-binding domain. Disulfide bonds link cysteine 447–cysteine 460, cysteine 454–cysteine 469, cysteine 471–cysteine 483, cysteine 489–cysteine 502, cysteine 496–cysteine 511, cysteine 513–cysteine 524, cysteine 528–cysteine 538, cysteine 532–cysteine 544, and cysteine 546–cysteine 555. 3 residues coordinate Ca(2+): asparagine 462, threonine 463, and serine 466. The region spanning 485–525 (EHDECLTNQHNCDENALCFNTVGGHNCVCKPGYTGNGTTCK) is the EGF-like 3; calcium-binding domain. Asparagine 520 is a glycosylation site (N-linked (GlcNAc...) asparagine). The EGF-like 4 domain occupies 526–556 (AFCKDGCRNGGACIAANVCACPQGFTGPSCE). A glycan (O-linked (GlcNAc...) threonine) is linked at threonine 551. Residues aspartate 558, isoleucine 559, and glutamate 561 each contribute to the Ca(2+) site. The EGF-like 5; calcium-binding domain maps to 558–604 (DIDECSEGFVQCDSRANCINLPGWYHCECRDGYHDNGMFAPGGESCE). 3 cysteine pairs are disulfide-bonded: cysteine 562/cysteine 575, cysteine 569/cysteine 584, and cysteine 586/cysteine 603. Ca(2+) contacts are provided by asparagine 577, leucine 578, and tryptophan 581. Ca(2+) is bound by residues aspartate 605, isoleucine 606, and glutamate 608. One can recognise an EGF-like 6; calcium-binding domain in the interval 605–640 (DIDECGTGRHSCANDTICFNLDGGYDCRCPHGKNCT). 3 disulfide bridges follow: cysteine 609/cysteine 622, cysteine 616/cysteine 631, and cysteine 633/cysteine 639. Asparagine 618 carries an N-linked (GlcNAc...) asparagine glycan. Residues asparagine 624, leucine 625, and glycine 628 each coordinate Ca(2+). Asparagine 638 carries N-linked (GlcNAc...) asparagine glycosylation. 2 consecutive VWFC domains span residues 641-696 (GDCV…PECD) and 701-759 (SQCL…PRCV).

Homotrimer. Binds to PRKCB. Interacts with NICOL1; this interaction triggers epididymal differentiation. As to quaternary structure, binds to PRKCB. Widely expressed. Expressed in cortical astrocytes but not in neuron. In terms of tissue distribution, widely expressed in brain. High expression is observed in telencephalic and diencephalic glutamatergic neurons, while no expression is found in GABAergic and GNRH neurons.

The protein localises to the secreted. The protein resides in the cytoplasm. Plays multiple roles In neural tissues, regulates neuronal proliferation, survival, differentiation, polarization, as well as axon guidance and synaptic functions. Plays an important role in axon development during neuronal differentiation through the MAPK intracellular signaling pathway. Via binding to its receptor ROBO3, plays a role in axon guidance, functioning as a repulsive axon guidance cue that contributes to commissural axon guidance to the midline. Required for neuron survival through the modulation of MAPK signaling pathways too. Involved in the regulation of hypothalamic GNRH secretion and the control of puberty. Its function is as follows. Epididymal-secreted protein that signals through a ROS1-pathway to regulate the epididymal initial segment (IS) maturation, sperm maturation and male fertility. Functionally, acts as an endogenous inhibitor of PRKCB in glia. This is Protein kinase C-binding protein NELL2 (Nell2) from Rattus norvegicus (Rat).